A 460-amino-acid polypeptide reads, in one-letter code: GTPase Der (460 aa).

EngA-type G domains are found at residues 3 to 167 (FTFA…PEPD) and 189 to 364 (IRVA…ATWN). Residues 9-16 (GRPNVGKS), 56-60 (DTAGL), 119-122 (NKSE), 195-202 (GRPNAGKS), 242-246 (DTAGL), and 307-310 (NKWD) contribute to the GTP site. In terms of domain architecture, KH-like spans 365-449 (RRVPTAALNR…PVRIMLREKA (85 aa)).

It belongs to the TRAFAC class TrmE-Era-EngA-EngB-Septin-like GTPase superfamily. EngA (Der) GTPase family. In terms of assembly, associates with the 50S ribosomal subunit.

GTPase that plays an essential role in the late steps of ribosome biogenesis. In Rhodopseudomonas palustris (strain BisA53), this protein is GTPase Der.